The chain runs to 261 residues: tRNA U34 carboxymethyltransferase (261 aa).

Residues Lys-25, Trp-39, Lys-44, Gly-63, 114-115 (VE), Tyr-135, and Arg-250 each bind carboxy-S-adenosyl-L-methionine.

Belongs to the class I-like SAM-binding methyltransferase superfamily. CmoB family. As to quaternary structure, homotetramer.

The enzyme catalyses carboxy-S-adenosyl-L-methionine + 5-hydroxyuridine(34) in tRNA = 5-carboxymethoxyuridine(34) in tRNA + S-adenosyl-L-homocysteine + H(+). Catalyzes carboxymethyl transfer from carboxy-S-adenosyl-L-methionine (Cx-SAM) to 5-hydroxyuridine (ho5U) to form 5-carboxymethoxyuridine (cmo5U) at position 34 in tRNAs. This is tRNA U34 carboxymethyltransferase from Helicobacter pylori (strain Shi470).